Consider the following 724-residue polypeptide: Disks large homolog 4 (724 aa).

Residues Cys-3 and Cys-5 are each lipidated (S-palmitoyl cysteine). Residues 15–35 (QDEDTPPLEHSPAHLPNQANS) are disordered. 2 consecutive PDZ domains span residues 65–151 (EITL…VMRR) and 160–246 (EIKL…VAKP). Residues Ser-73 and Ser-142 each carry the phosphoserine modification. Tyr-240 bears the Phosphotyrosine mark. At Ser-295 the chain carries Phosphoserine. The 81-residue stretch at 313-393 (RIVIHRGSTG…QTVTIIAQYK (81 aa)) folds into the PDZ 3 domain. A phosphoserine mark is found at Ser-415 and Ser-418. Thr-420 carries the phosphothreonine modification. A phosphoserine mark is found at Ser-422, Ser-425, Ser-449, and Ser-480. The 71-residue stretch at 428-498 (KRGFYIRALF…PSKRRVERRE (71 aa)) folds into the SH3 domain. The Guanylate kinase-like domain maps to 534–709 (ARPIIILGPT…IYHKVKRVIE (176 aa)). Tyr-580 carries the post-translational modification Phosphotyrosine. 2 positions are modified to phosphoserine: Ser-606 and Ser-654. Tyr-715 is modified (phosphotyrosine).

It belongs to the MAGUK family. Interacts through its PDZ domains with ANO2 and NETO1. Interacts through its first two PDZ domains with GRIN2A, GRIN2B, GRIN2C, GRIN2D. Interacts with ASIC3. Interacts with SEMA4C. Interacts with CXADR. Interacts with KCND2. Interacts with SYNGAP1. Interacts with LRRC4 and LRRC4B. Interacts with ERBB4. Interacts with KCNA1, KCNA2, KCNA3 and KCNA4. Interacts through its first PDZ domain with GRIK2, KCNA4 and CRIPT. Interacts through its second PDZ domain with the PDZ domain of NOS1 or the C-terminus of CAPON. Interacts through its third PDZ domain with NLGN1 and CRIPT, and probably with NLGN2 and NLGN3. Interacts through its guanylate kinase-like domain with KIF13B. Interacts through its guanylate kinase-like domain with DLGAP1/GKAP, DLGAP2, DLGAP3, DLGAP4, MAP1A, BEGAIN and SIPA1L1. Isoform 2 interacts through an L27 domain with HGS/HRS and the first L27 domain of CASK. Interacts with ADR1B and ANKS1B. May interact with HTR2A. Interacts with ADAM22. Interacts with KLHL17 and LGI1. Interacts with FRMPD4 (via C-terminus). Interacts with LRFN1, LRFN2 and LRFN4. Interacts (via N-terminal tandem pair of PDZ domains) with GPER1 (via C-terminus tail motif); the interaction is direct and induces the increase of GPER1 protein levels residing at the plasma membrane surface in a estradiol-independent manner. Interacts (via N-terminus tandem pair of PDZ domains) with NOS1 (via N-terminal domain). Interacts with SHANK3. Interacts with KCNJ4. Interacts with GPR85. Interacts with CACNG2 and MPP2 (via the SH3-Guanylate kinase-like sub-module). Interacts with ADGRB1. Found in a complex with PRR7 and GRIN1. Interacts (via PDZ3 domain and to lesser degree via PDZ2 domain) with PRR7. Component of the postsynaptic hippocampal AMPA-type glutamate receptor (AMPAR) complex, at least composed of pore forming AMPAR subunits GRIA1, GRIA2 and GRIA3 and AMPAR auxiliary proteins SHISA6 and SHISA7. Interacts (via its first two PDZ domains) with SHISA6 and SHISA7 (via PDZ-binding motif); the interaction is direct. Interacts with RPH3A and GRIN2A; this ternary complex regulates NMDA receptor composition at postsynaptic membranes. Interacts with ABR and BCR. Interacts with DGKI (via PDZ-binding motif); controls the localization of DGKI to the synapse. Interacts with C9orf72, SMCR8 and RAB39B. Interacts with ZDHHC5. Interacts with PTEN (via PDZ domain-binding motif); the interaction is induced by NMDA and is required for PTEN location at postsynaptic density. Found in a complex with GRIA1, GRIA2, GRIA3, GRIA4, CACNG8 and CNIH2. Interacts with FAM81A; the interaction facilitates condensate formation via liquid-liquid phase separation. Interacts with ADGRL3. Interacts with SORCS3. Palmitoylated. Palmitoylation is required for targeting to postsynaptic density, plasma membrane and synapses. Palmitoylation by ZDHHC2 occurs when the synaptic activity decreases and induces DLG4 synaptic clustering. Palmitoylation by ZDHHC15 regulates trafficking to the postsynaptic density and function in synaptogenesis. Palmitoylation may play a role in glutamate receptor GRIA1 synapse clustering. Depalmitoylated by ABHD17A and ABHD17B and to a lesser extent by ABHD17C, ABHD12, ABHD13, LYPLA1 and LYPLA2. Undergoes rapid synaptic palmitoylation/depalmitoylation cycles during neuronal development which slow down in mature neurons. Post-translationally, ubiquitinated by MDM2 in response to NMDA receptor activation, leading to proteasome-mediated degradation of DLG4 which is required for AMPA receptor endocytosis. As to expression, brain.

The protein resides in the cell membrane. Its subcellular location is the postsynaptic density. It is found in the synapse. The protein localises to the cytoplasm. It localises to the cell projection. The protein resides in the axon. Its subcellular location is the dendritic spine. It is found in the dendrite. The protein localises to the presynapse. Its function is as follows. Postsynaptic scaffolding protein that plays a critical role in synaptogenesis and synaptic plasticity by providing a platform for the postsynaptic clustering of crucial synaptic proteins. Interacts with the cytoplasmic tail of NMDA receptor subunits and shaker-type potassium channels. Required for synaptic plasticity associated with NMDA receptor signaling. Overexpression or depletion of DLG4 changes the ratio of excitatory to inhibitory synapses in hippocampal neurons. May reduce the amplitude of ASIC3 acid-evoked currents by retaining the channel intracellularly. May regulate the intracellular trafficking of ADR1B. Also regulates AMPA-type glutamate receptor (AMPAR) immobilization at postsynaptic density keeping the channels in an activated state in the presence of glutamate and preventing synaptic depression. Under basal conditions, cooperates with FYN to stabilize palmitoyltransferase ZDHHC5 at the synaptic membrane through FYN-mediated phosphorylation of ZDHHC5 and its subsequent inhibition of association with endocytic proteins. This Homo sapiens (Human) protein is Disks large homolog 4.